The sequence spans 91 residues: DNA-binding protein HRL53 (91 aa).

The tract at residues 57–91 is disordered; sequence ATKGRNPSTGAEVDIPARNVPKFTPGKGLKDAVNG.

The protein belongs to the bacterial histone-like protein family.

Its function is as follows. Histone-like DNA-binding protein which is capable of wrapping DNA to stabilize it, and thus to prevent its denaturation under extreme environmental conditions. Binds to nod promoters and induces DNA binding. This Rhizobium leguminosarum protein is DNA-binding protein HRL53.